Here is a 1368-residue protein sequence, read N- to C-terminus: MHYSFTEKKRIRKSFAKRANVHNVPFLLATQLESYHGFLQEDKIPSQRKNEGLQSAFTSIFPIVSHNGFARLEFLSYVLGDPPFNIKECQQRGLTYASPLRAKVRLVILDKESPTKPVVKEMKEQEVYMGELPLMTSTGSFVINGTERVIVSQLHRSPGVFFEHDRGKTHSSGKLLFSARIIPYRGSWLDYEFDPKDILFFRVDRRRKMPVTILLKAIGMTPEQILENFFVFDDFALHADGAEMAFVAERLRGEVARFDITDKAGKVLVAKDKRINSKHVRDVEAAGIKNISVPEDYLLGRILAKNIVDKETGEVIANANDELTEDLLARLREGKVTHIQTLYTNDLDQGGYISQTLRMDDTTDQMAAKVAIYRMMRPGEPPTEDSVEALFNGLFYNADRYDLSAVGRMKFNRRIGRDELTGDMTLSNDDVLAVIKILVELRNGRGEVDDIDHLGNRRVRCVGELAENQFRAGLVRVERAVKERLGQAEADNLMPHDLINSKPISAAIREFFGSSQLSQFMDQTNPLSEITHKRRVSALGPGGLTRERAGFEVRDVHPTHYGRVCPIETPEGPNIGLINSLALYARLNEYGFLETPYRKVEGSKITDQIDYLSAIEEGRYIIAQANATIDKSGALSDELVSAREAGETILVSPERVQYMDVAPGQVVSVAASLIPFLEHDDANRALMGANMQRQAVPCLRPEKAFVGTGIERTVAVDSGTTVQALRGGIVDYIDAGRVVIRVNDDEAQAGEVGVDIYNLIKYTRSNQNTNINQRPIVQVGDRVAKHDVIADGASTDLGELALGQNMLVAFMPWNGYNFEDSILISEKVVADDRYTSIHIEELSVVARDTKLGAEEITRDISNLAENQLARLDESGIVYIGAEVTAGDTLVGKVTPKGETQLTPEEKLLRAIFGEKASDVKDTSLRVPSGMVGTVIDVQVFTREGIPRDKRAQQIIDDELQRYRLDLNDQLRIVEGDAFQRLEKMLIGKVVNGGPKKIAKGAKITKEYLDDLDKYHWFDIRPADDTSANALEAIKESIAEKRHQFDLAFEEKRKKLTQGDELPPGVQKMVKVYLAVKRRLQPGDKMAGRHGNKGVVSRILPIEDMPHMADGTPADVVLNPLGVPSRMNVGQVLEVHLGWAAKGLGLRIGEMLNAQVQIAELRKFLAAIYNESGKTEDLDSFSDAEILELAGNLKNGVPFATPVFDGADEGETRRMLDLAYPDHIAKQLGMTASKNQVTMYDGRTGEAFERTVTVGYMHYLKLHHLVDDKMHARSTGPYSLVTQQPLGGKAQFGGQRFGEMEVWALEAYGASYVLQEMLTVKSDDVNGRTKVYENLVKGDHVIDAGMPESFNVLVKEIRSLGIDIDLERD.

Belongs to the RNA polymerase beta chain family. As to quaternary structure, the RNAP catalytic core consists of 2 alpha, 1 beta, 1 beta' and 1 omega subunit. When a sigma factor is associated with the core the holoenzyme is formed, which can initiate transcription.

It carries out the reaction RNA(n) + a ribonucleoside 5'-triphosphate = RNA(n+1) + diphosphate. In terms of biological role, DNA-dependent RNA polymerase catalyzes the transcription of DNA into RNA using the four ribonucleoside triphosphates as substrates. The chain is DNA-directed RNA polymerase subunit beta from Janthinobacterium sp. (strain Marseille) (Minibacterium massiliensis).